The following is a 108-amino-acid chain: Succinate dehydrogenase assembly factor 4, mitochondrial (108 aa).

Residues 33–46 (NNNNNNNNNNNNNN) are compositionally biased toward low complexity. 2 disordered regions span residues 33–59 (NNNN…KENQ) and 79–108 (NPIT…VSDF). Basic and acidic residues predominate over residues 95–108 (RYNDWERNGRVSDF).

It belongs to the SDHAF4 family. As to quaternary structure, interacts with SdhA in its FAD-bound form.

The protein localises to the mitochondrion matrix. Its function is as follows. Plays an essential role in the assembly of succinate dehydrogenase (SDH), an enzyme complex (also referred to as respiratory complex II) that is a component of both the tricarboxylic acid (TCA) cycle and the mitochondrial electron transport chain, and which couples the oxidation of succinate to fumarate with the reduction of ubiquinone (coenzyme Q) to ubiquinol. Binds to the flavoprotein subunit SdhA in its FAD-bound form, blocking the generation of excess reactive oxygen species (ROS) and facilitating its assembly with the iron-sulfur protein subunit SdhB into the SDH catalytic dimer. This Dictyostelium discoideum (Social amoeba) protein is Succinate dehydrogenase assembly factor 4, mitochondrial.